A 469-amino-acid polypeptide reads, in one-letter code: Siroheme synthase (469 aa).

Positions methionine 1–leucine 211 are precorrin-2 dehydrogenase /sirohydrochlorin ferrochelatase. Residues glutamate 29–glutamine 30 and aspartate 50–proline 51 contribute to the NAD(+) site. Residue serine 136 is modified to Phosphoserine. The segment at glycine 227–aspartate 469 is uroporphyrinogen-III C-methyltransferase. S-adenosyl-L-methionine is bound at residue proline 236. Aspartate 259 functions as the Proton acceptor in the catalytic mechanism. The Proton donor role is filled by lysine 281. S-adenosyl-L-methionine contacts are provided by residues glycine 312–aspartate 314, isoleucine 317, threonine 342–alanine 343, methionine 394, and glycine 423.

It in the N-terminal section; belongs to the precorrin-2 dehydrogenase / sirohydrochlorin ferrochelatase family. The protein in the C-terminal section; belongs to the precorrin methyltransferase family.

The enzyme catalyses uroporphyrinogen III + 2 S-adenosyl-L-methionine = precorrin-2 + 2 S-adenosyl-L-homocysteine + H(+). It carries out the reaction precorrin-2 + NAD(+) = sirohydrochlorin + NADH + 2 H(+). It catalyses the reaction siroheme + 2 H(+) = sirohydrochlorin + Fe(2+). The protein operates within cofactor biosynthesis; adenosylcobalamin biosynthesis; precorrin-2 from uroporphyrinogen III: step 1/1. Its pathway is cofactor biosynthesis; adenosylcobalamin biosynthesis; sirohydrochlorin from precorrin-2: step 1/1. It participates in porphyrin-containing compound metabolism; siroheme biosynthesis; precorrin-2 from uroporphyrinogen III: step 1/1. It functions in the pathway porphyrin-containing compound metabolism; siroheme biosynthesis; siroheme from sirohydrochlorin: step 1/1. The protein operates within porphyrin-containing compound metabolism; siroheme biosynthesis; sirohydrochlorin from precorrin-2: step 1/1. Multifunctional enzyme that catalyzes the SAM-dependent methylations of uroporphyrinogen III at position C-2 and C-7 to form precorrin-2 via precorrin-1. Then it catalyzes the NAD-dependent ring dehydrogenation of precorrin-2 to yield sirohydrochlorin. Finally, it catalyzes the ferrochelation of sirohydrochlorin to yield siroheme. The sequence is that of Siroheme synthase from Hahella chejuensis (strain KCTC 2396).